Consider the following 345-residue polypeptide: S-adenosylmethionine:tRNA ribosyltransferase-isomerase (345 aa).

The protein belongs to the QueA family. As to quaternary structure, monomer.

It localises to the cytoplasm. The enzyme catalyses 7-aminomethyl-7-carbaguanosine(34) in tRNA + S-adenosyl-L-methionine = epoxyqueuosine(34) in tRNA + adenine + L-methionine + 2 H(+). It participates in tRNA modification; tRNA-queuosine biosynthesis. In terms of biological role, transfers and isomerizes the ribose moiety from AdoMet to the 7-aminomethyl group of 7-deazaguanine (preQ1-tRNA) to give epoxyqueuosine (oQ-tRNA). In Helicobacter pylori (strain HPAG1), this protein is S-adenosylmethionine:tRNA ribosyltransferase-isomerase.